A 236-amino-acid chain; its full sequence is Urease accessory protein UreG 2 (236 aa).

The segment at 1 to 40 (MEASVHIGNSVPHAHLHSAAPARPADPVRPDGSRRALRIG) is disordered. 43–50 (GPVGSGKT) contributes to the GTP binding site.

The protein belongs to the SIMIBI class G3E GTPase family. UreG subfamily. In terms of assembly, homodimer. UreD, UreF and UreG form a complex that acts as a GTP-hydrolysis-dependent molecular chaperone, activating the urease apoprotein by helping to assemble the nickel containing metallocenter of UreC. The UreE protein probably delivers the nickel.

The protein localises to the cytoplasm. In terms of biological role, facilitates the functional incorporation of the urease nickel metallocenter. This process requires GTP hydrolysis, probably effectuated by UreG. The polypeptide is Urease accessory protein UreG 2 (Saccharopolyspora erythraea (strain ATCC 11635 / DSM 40517 / JCM 4748 / NBRC 13426 / NCIMB 8594 / NRRL 2338)).